The chain runs to 456 residues: Vitamin K-dependent protein C (456 aa).

Positions 1 to 20 (MWQLASLSLLLTICGTCSTA) are cleaved as a signal peptide. Residues 21-42 (APPGSVFSSSESAHQVLRIRKR) constitute a propeptide that is removed on maturation. The region spanning 47–88 (LEEIRAGSLERECMEEICDFEEAKEIFQNVDDTLAYWSKYVD) is the Gla domain. 4-carboxyglutamate occurs at positions 48, 49, 56, 58, 61, 62, 67, 68, and 71. Cys59 and Cys64 form a disulfide bridge. 4 disulfides stabilise this stretch: Cys92/Cys111, Cys101/Cys106, Cys105/Cys120, and Cys122/Cys131. EGF-like domains follow at residues 97–132 (PEHACDSPCCGHGSCIDGIGAFHCDCGRGWEGRFCQ) and 136–176 (SYIN…LQCQ). Asp113 carries the (3R)-3-hydroxyaspartate modification. Residue Asn139 is glycosylated (N-linked (GlcNAc...) asparagine). 5 disulfide bridges follow: Cys140/Cys151, Cys147/Cys160, Cys162/Cys175, Cys183/Cys318, and Cys237/Cys253. N-linked (GlcNAc...) asparagine glycosylation occurs at Asn202. Positions 211–445 (LVNGKVTRRG…YLDWIHSHIR (235 aa)) constitute a Peptidase S1 domain. The active-site Charge relay system is the His252. An N-linked (GlcNAc...) asparagine glycan is attached at Asn289. Asp298 (charge relay system) is an active-site residue. Asn350 carries N-linked (GlcNAc...) asparagine glycosylation. 2 cysteine pairs are disulfide-bonded: Cys368–Cys382 and Cys393–Cys421. The Charge relay system role is filled by Ser397.

It belongs to the peptidase S1 family. Synthesized as a single chain precursor, which is cleaved into a light chain and a heavy chain held together by a disulfide bond. The enzyme is then activated by thrombin, which cleaves a tetradecapeptide from the amino end of the heavy chain; this reaction, which occurs at the surface of endothelial cells, is strongly promoted by thrombomodulin. The vitamin K-dependent, enzymatic carboxylation of some Glu residues allows the modified protein to bind calcium. Post-translationally, the iron and 2-oxoglutarate dependent 3-hydroxylation of aspartate and asparagine is (R) stereospecific within EGF domains. Plasma; synthesized in the liver.

The protein resides in the secreted. It localises to the golgi apparatus. The protein localises to the endoplasmic reticulum. The catalysed reaction is Degradation of blood coagulation factors Va and VIIIa.. Its function is as follows. Protein C is a vitamin K-dependent serine protease that regulates blood coagulation by inactivating factors Va and VIIIa in the presence of calcium ions and phospholipids. Exerts a protective effect on the endothelial cell barrier function. The protein is Vitamin K-dependent protein C (PROC) of Canis lupus familiaris (Dog).